Here is a 253-residue protein sequence, read N- to C-terminus: DNA repair protein RecO (253 aa).

It belongs to the RecO family.

In terms of biological role, involved in DNA repair and RecF pathway recombination. This chain is DNA repair protein RecO, found in Nitrobacter hamburgensis (strain DSM 10229 / NCIMB 13809 / X14).